A 1138-amino-acid polypeptide reads, in one-letter code: Phosphatidylserine decarboxylase proenzyme 2 (1138 aa).

Residues 1-122 (MRIIKGRKRG…SNSGLSSHSH (122 aa)) enclose the C2 1 domain. 3 disordered regions span residues 90 to 166 (TGAP…PGST), 269 to 305 (MRSSSSLPPPLEDMLSNSSAVSGNEIRREKPYSDTDL), and 413 to 448 (AVSENDITSVDDEESENQQESDEEFDIYNEDEREDS). Positions 98–121 (SRPRTTTANTSSSTLSNSGLSSHS) are enriched in low complexity. The segment covering 125–135 (RNLNVTSKGNQ) has biased composition (polar residues). Residues 136 to 166 (TSTSINSVSSSATPAPSHSSSSLSTTGPGST) show a composition bias toward low complexity. Residues 293–305 (EIRREKPYSDTDL) show a composition bias toward basic and acidic residues. Over residues 421 to 448 (SVDDEESENQQESDEEFDIYNEDEREDS) the composition is skewed to acidic residues. The 123-residue stretch at 478 to 600 (RRAKSNFFIS…QQQQHENEWI (123 aa)) folds into the C2 2 domain. Ca(2+) contacts are provided by Asp-571, Ser-574, and Asp-577. Residues Asp-899, His-956, and Ser-1043 each act as charge relay system; for autoendoproteolytic cleavage activity in the active site. The active-site Schiff-base intermediate with substrate; via pyruvic acid; for decarboxylase activity is Ser-1043. Ser-1043 carries the post-translational modification Pyruvic acid (Ser); by autocatalysis.

It belongs to the phosphatidylserine decarboxylase family. PSD-B subfamily. Eukaryotic type II sub-subfamily. Heterodimer of a large membrane-associated beta subunit and a small pyruvoyl-containing alpha subunit. Interacts with pstB2/PDR17. This interaction may be a means to structurally tether the donor membrane (ER) harboring PstB2/PDR17 to acceptor membranes (Golgi/endosomes) harboring PSD2 during PtdSer transport to the site of PtdEtn synthesis. It depends on pyruvate as a cofactor. Ca(2+) serves as cofactor. Is synthesized initially as an inactive proenzyme. Formation of the active enzyme involves a self-maturation process in which the active site pyruvoyl group is generated from an internal serine residue via an autocatalytic post-translational modification. Two non-identical subunits are generated from the proenzyme in this reaction, and the pyruvate is formed at the N-terminus of the alpha chain, which is derived from the carboxyl end of the proenzyme. The autoendoproteolytic cleavage occurs by a canonical serine protease mechanism, in which the side chain hydroxyl group of the serine supplies its oxygen atom to form the C-terminus of the beta chain, while the remainder of the serine residue undergoes an oxidative deamination to produce ammonia and the pyruvoyl prosthetic group on the alpha chain. During this reaction, the Ser that is part of the protease active site of the proenzyme becomes the pyruvoyl prosthetic group, which constitutes an essential element of the active site of the mature decarboxylase.

It is found in the golgi apparatus membrane. Its subcellular location is the endosome membrane. It carries out the reaction a 1,2-diacyl-sn-glycero-3-phospho-L-serine + H(+) = a 1,2-diacyl-sn-glycero-3-phosphoethanolamine + CO2. The protein operates within phospholipid metabolism; phosphatidylethanolamine biosynthesis; phosphatidylethanolamine from CDP-diacylglycerol: step 2/2. Its function is as follows. Catalyzes the formation of phosphatidylethanolamine (PtdEtn) from phosphatidylserine (PtdSer). Plays a central role in phospholipid metabolism and in the interorganelle trafficking of phosphatidylserine. Phosphatidylethanolamine produced by PSD2 is insufficient to completely provide the PtdEtn pool required by mitochondria under respiratory conditions. PSD2 is also involved in the PtdSer transport step to the site of PtdEtn synthesis on the Golgi/endosome membranes. Required for normal heavy metal resistance. In Saccharomyces cerevisiae (strain ATCC 204508 / S288c) (Baker's yeast), this protein is Phosphatidylserine decarboxylase proenzyme 2.